The following is a 257-amino-acid chain: MSPVDVWVGSWRPHKPRGPIAAMYNSPGPTYALPGATGMNNHDPRMQKGPAFSFGIRHHNFHGNYSPGPGYLVPSNITRVGRDGTPAYSVYGRRKDIQPFQTPGPGSYSPENATKATYLSPPAFTLSARTKLFRNDQTPGPAAYMLPPVLGPKVVNKTSAPNVSFSGRSAIGSFHEDLRKTPGPGTYQVVDPCVYKHKGPQYSMTGRNMMPGDMTKKPGPGAHYPEMVCFTRAKAPSFSFGIRHSEYVAPTIVDGED.

3 STPGR repeats span residues 103–129, 182–207, and 218–243; these read PGPG…LSAR, PGPG…MTGR, and PGPG…FGIR.

Belongs to the CIMAP family.

It localises to the cell projection. The protein resides in the cilium. The protein localises to the flagellum. This chain is Ciliary microtubule associated protein 1B (cimap1b), found in Danio rerio (Zebrafish).